The following is a 942-amino-acid chain: Zinc finger protein 865 (942 aa).

Positions Phe-66–Pro-106 are disordered. Over residues Ala-96–Pro-106 the composition is skewed to polar residues. 20 consecutive C2H2-type zinc fingers follow at residues Phe-172 to His-194, Tyr-200 to His-222, Phe-282 to His-304, Phe-310 to His-332, Val-338 to His-360, Tyr-367 to His-389, Phe-466 to His-488, His-494 to His-516, Tyr-522 to His-544, Phe-564 to His-586, Tyr-592 to His-614, Phe-678 to His-700, Leu-706 to His-728, Phe-734 to His-756, Tyr-762 to His-784, Tyr-790 to His-812, Gln-818 to His-840, Tyr-846 to His-868, Leu-874 to His-896, and Phe-902 to His-924.

Belongs to the krueppel C2H2-type zinc-finger protein family.

Its subcellular location is the nucleus. May be involved in transcriptional regulation. This is Zinc finger protein 865 (znf865) from Xenopus tropicalis (Western clawed frog).